Here is a 355-residue protein sequence, read N- to C-terminus: Peptide chain release factor 1 (355 aa).

Residue glutamine 232 is modified to N5-methylglutamine.

It belongs to the prokaryotic/mitochondrial release factor family. In terms of processing, methylated by PrmC. Methylation increases the termination efficiency of RF1.

Its subcellular location is the cytoplasm. In terms of biological role, peptide chain release factor 1 directs the termination of translation in response to the peptide chain termination codons UAG and UAA. This is Peptide chain release factor 1 from Kineococcus radiotolerans (strain ATCC BAA-149 / DSM 14245 / SRS30216).